The primary structure comprises 269 residues: 4-hydroxy-tetrahydrodipicolinate reductase (269 aa).

NAD(+) contacts are provided by residues 10–15, E36, 99–101, and 123–126; these read GANGRM, GTT, and AANF. The Proton donor/acceptor role is filled by H156. H157 lines the (S)-2,3,4,5-tetrahydrodipicolinate pocket. K160 (proton donor) is an active-site residue. 166–167 contributes to the (S)-2,3,4,5-tetrahydrodipicolinate binding site; that stretch reads GT.

This sequence belongs to the DapB family.

Its subcellular location is the cytoplasm. It catalyses the reaction (S)-2,3,4,5-tetrahydrodipicolinate + NAD(+) + H2O = (2S,4S)-4-hydroxy-2,3,4,5-tetrahydrodipicolinate + NADH + H(+). The catalysed reaction is (S)-2,3,4,5-tetrahydrodipicolinate + NADP(+) + H2O = (2S,4S)-4-hydroxy-2,3,4,5-tetrahydrodipicolinate + NADPH + H(+). It participates in amino-acid biosynthesis; L-lysine biosynthesis via DAP pathway; (S)-tetrahydrodipicolinate from L-aspartate: step 4/4. Functionally, catalyzes the conversion of 4-hydroxy-tetrahydrodipicolinate (HTPA) to tetrahydrodipicolinate. The polypeptide is 4-hydroxy-tetrahydrodipicolinate reductase (Neisseria meningitidis serogroup B (strain ATCC BAA-335 / MC58)).